The chain runs to 271 residues: MSLKFKSIAAISALIGTLTLVGCGPTEKAPNHIKVGVIVGAEQQVAEVAQKVAKEKYGLDVELVTFNDYVLPNEALSKGDIDLNAFQHKPYLDQQIKDRGYKLVSVGNSFVYPIAGYSKKIKSLDELQPGSQVALPNDPTNLGRSLLLLQSVGLIKLKDGVGLLPTVLDVVENPKNLKLVELEAPQLPRSLDDQQIALAIINTTYASQIGLTPAKDGLFVEDKESPYVNLIVAREDNKDAENVKKFVQAYQSDEVYDAANKAFNGGAVKGW.

A signal peptide spans 1–22 (MSLKFKSIAAISALIGTLTLVG). The N-palmitoyl cysteine moiety is linked to residue C23. The S-diacylglycerol cysteine moiety is linked to residue C23.

This sequence belongs to the NlpA lipoprotein family.

The protein localises to the cell membrane. This protein is a component of a D-methionine permease, a binding protein-dependent, ATP-driven transport system. This chain is D-methionine-binding lipoprotein MetQ (metQ), found in Yersinia pestis.